The following is a 162-amino-acid chain: NADH-quinone oxidoreductase subunit I (162 aa).

4Fe-4S ferredoxin-type domains lie at 53-83 and 93-122; these read LRRY…IEAE and TRYD…EGPN. Residues C63, C66, C69, C73, C102, C105, C108, and C112 each coordinate [4Fe-4S] cluster.

This sequence belongs to the complex I 23 kDa subunit family. In terms of assembly, NDH-1 is composed of 14 different subunits. Subunits NuoA, H, J, K, L, M, N constitute the membrane sector of the complex. [4Fe-4S] cluster is required as a cofactor.

It is found in the cell inner membrane. The catalysed reaction is a quinone + NADH + 5 H(+)(in) = a quinol + NAD(+) + 4 H(+)(out). NDH-1 shuttles electrons from NADH, via FMN and iron-sulfur (Fe-S) centers, to quinones in the respiratory chain. The immediate electron acceptor for the enzyme in this species is believed to be ubiquinone. Couples the redox reaction to proton translocation (for every two electrons transferred, four hydrogen ions are translocated across the cytoplasmic membrane), and thus conserves the redox energy in a proton gradient. This is NADH-quinone oxidoreductase subunit I from Rhodospirillum centenum (strain ATCC 51521 / SW).